The primary structure comprises 371 residues: DNA-directed RNA polymerase subunit alpha (371 aa).

An alpha N-terminal domain (alpha-NTD) region spans residues 1-248 (MSVKYGKFEM…KHFEVFNQFN (248 aa)). An alpha C-terminal domain (alpha-CTD) region spans residues 264–371 (DQDELMDKLS…KELVKHEDAK (108 aa)).

It belongs to the RNA polymerase alpha chain family. Homodimer. The RNAP catalytic core consists of 2 alpha, 1 beta, 1 beta' and 1 omega subunit. When a sigma factor is associated with the core the holoenzyme is formed, which can initiate transcription.

The enzyme catalyses RNA(n) + a ribonucleoside 5'-triphosphate = RNA(n+1) + diphosphate. Its function is as follows. DNA-dependent RNA polymerase catalyzes the transcription of DNA into RNA using the four ribonucleoside triphosphates as substrates. This chain is DNA-directed RNA polymerase subunit alpha, found in Protochlamydia amoebophila (strain UWE25).